Consider the following 288-residue polypeptide: dTDP-4-keto-6-deoxy-D-glucose reductase (288 aa).

Residues 12–14 (GML), 38–39 (DI), 62–64 (AWT), Tyr127, and Lys131 each bind NADH. Residues 13 to 14 (ML), 38 to 39 (DI), 62 to 64 (AWT), Tyr127, and Lys131 contribute to the NADPH site. Tyr127 serves as the catalytic Proton donor/acceptor.

This sequence belongs to the dTDP-4-dehydrorhamnose reductase family. Mg(2+) is required as a cofactor.

It functions in the pathway antibiotic biosynthesis; novobiocin biosynthesis. Functionally, reduces the product formed from the reaction of NovW with dTDP-4-keto-6-deoxy-D-glucose to result in dTDP-5-methyl-L-rhamnose in the novobiocin biosynthesis pathway, an aminocoumarin family antibiotic that targets bacterial DNA gyrases. The polypeptide is dTDP-4-keto-6-deoxy-D-glucose reductase (novS) (Streptomyces niveus (Streptomyces spheroides)).